A 333-amino-acid chain; its full sequence is ADP-L-glycero-D-manno-heptose-6-epimerase (333 aa).

NADP(+) is bound by residues 11–12, 32–33, K39, K54, 76–80, and N93; these read FI, DN, and QGACS. Y140 serves as the catalytic Proton acceptor. Residue K144 participates in NADP(+) binding. Residue N170 participates in substrate binding. Residues V171 and K179 each contribute to the NADP(+) site. K179 functions as the Proton acceptor in the catalytic mechanism. Residues R181, H188, 202–205, R215, and Y294 contribute to the substrate site; that span reads FGGW.

Belongs to the NAD(P)-dependent epimerase/dehydratase family. HldD subfamily. Homopentamer. NADP(+) serves as cofactor.

It carries out the reaction ADP-D-glycero-beta-D-manno-heptose = ADP-L-glycero-beta-D-manno-heptose. The protein operates within nucleotide-sugar biosynthesis; ADP-L-glycero-beta-D-manno-heptose biosynthesis; ADP-L-glycero-beta-D-manno-heptose from D-glycero-beta-D-manno-heptose 7-phosphate: step 4/4. It functions in the pathway bacterial outer membrane biogenesis; LPS core biosynthesis. Its function is as follows. Catalyzes the interconversion between ADP-D-glycero-beta-D-manno-heptose and ADP-L-glycero-beta-D-manno-heptose via an epimerization at carbon 6 of the heptose. The sequence is that of ADP-L-glycero-D-manno-heptose-6-epimerase from Chromobacterium violaceum (strain ATCC 12472 / DSM 30191 / JCM 1249 / CCUG 213 / NBRC 12614 / NCIMB 9131 / NCTC 9757 / MK).